Consider the following 149-residue polypeptide: Flagellar basal-body protein FlbY (149 aa).

In terms of assembly, the basal body constitutes a major portion of the flagellar organelle and consists of five rings (E,L,P,S, and M) mounted on a central rod.

It localises to the bacterial flagellum basal body. This chain is Flagellar basal-body protein FlbY (flbY), found in Caulobacter vibrioides (strain ATCC 19089 / CIP 103742 / CB 15) (Caulobacter crescentus).